We begin with the raw amino-acid sequence, 504 residues long: Lysine--tRNA ligase (504 aa).

The Mg(2+) site is built by E411 and E418.

This sequence belongs to the class-II aminoacyl-tRNA synthetase family. Homodimer. The cofactor is Mg(2+).

The protein localises to the cytoplasm. The enzyme catalyses tRNA(Lys) + L-lysine + ATP = L-lysyl-tRNA(Lys) + AMP + diphosphate. This Clostridium botulinum (strain Loch Maree / Type A3) protein is Lysine--tRNA ligase.